The chain runs to 335 residues: Lipoyl synthase (335 aa).

The span at M1–S13 shows a compositional bias: polar residues. The interval M1 to T29 is disordered. 7 residues coordinate [4Fe-4S] cluster: C75, C80, C86, C101, C105, C108, and S315. A Radical SAM core domain is found at C86 to A304.

The protein belongs to the radical SAM superfamily. Lipoyl synthase family. [4Fe-4S] cluster serves as cofactor.

Its subcellular location is the cytoplasm. The enzyme catalyses [[Fe-S] cluster scaffold protein carrying a second [4Fe-4S](2+) cluster] + N(6)-octanoyl-L-lysyl-[protein] + 2 oxidized [2Fe-2S]-[ferredoxin] + 2 S-adenosyl-L-methionine + 4 H(+) = [[Fe-S] cluster scaffold protein] + N(6)-[(R)-dihydrolipoyl]-L-lysyl-[protein] + 4 Fe(3+) + 2 hydrogen sulfide + 2 5'-deoxyadenosine + 2 L-methionine + 2 reduced [2Fe-2S]-[ferredoxin]. It participates in protein modification; protein lipoylation via endogenous pathway; protein N(6)-(lipoyl)lysine from octanoyl-[acyl-carrier-protein]: step 2/2. Catalyzes the radical-mediated insertion of two sulfur atoms into the C-6 and C-8 positions of the octanoyl moiety bound to the lipoyl domains of lipoate-dependent enzymes, thereby converting the octanoylated domains into lipoylated derivatives. The protein is Lipoyl synthase of Herminiimonas arsenicoxydans.